The primary structure comprises 648 residues: Centrosomal protein of 63 kDa-B (648 aa).

Coiled-coil stretches lie at residues 19–188 and 222–555; these read DSCE…QSHN and EEEL…DAAS. Residue serine 559 is modified to Phosphoserine; by atm and atr. A coiled-coil region spans residues 611 to 644; that stretch reads FLQEEEQRSHELLQRLNAHIEELKQESQRTVEHF.

Belongs to the CEP63 family. In terms of processing, phosphorylation at Ser-559 by atm and atr promotes its delocalization from the centrosome and impairs its ability to promote centrosome dependent spindle assembly.

The protein resides in the cytoplasm. It is found in the cytoskeleton. Its subcellular location is the microtubule organizing center. The protein localises to the centrosome. It localises to the centriole. In terms of biological role, required for normal spindle assembly. Plays a key role in mother-centriole-dependent centriole duplication. Plays a role in DNA damage response. Following DNA damage, such as double-strand breaks (DSBs), is removed from centrosomes; this leads to the inactivation of spindle assembly and delay in mitotic progression. The protein is Centrosomal protein of 63 kDa-B (cep63-b) of Xenopus laevis (African clawed frog).